The primary structure comprises 154 residues: SsrA-binding protein (154 aa).

The protein belongs to the SmpB family.

The protein resides in the cytoplasm. Required for rescue of stalled ribosomes mediated by trans-translation. Binds to transfer-messenger RNA (tmRNA), required for stable association of tmRNA with ribosomes. tmRNA and SmpB together mimic tRNA shape, replacing the anticodon stem-loop with SmpB. tmRNA is encoded by the ssrA gene; the 2 termini fold to resemble tRNA(Ala) and it encodes a 'tag peptide', a short internal open reading frame. During trans-translation Ala-aminoacylated tmRNA acts like a tRNA, entering the A-site of stalled ribosomes, displacing the stalled mRNA. The ribosome then switches to translate the ORF on the tmRNA; the nascent peptide is terminated with the 'tag peptide' encoded by the tmRNA and targeted for degradation. The ribosome is freed to recommence translation, which seems to be the essential function of trans-translation. The polypeptide is SsrA-binding protein (Staphylococcus aureus (strain USA300)).